Here is an 80-residue protein sequence, read N- to C-terminus: MKLTCVLIIAMLFLIVCQLNTADDSTDKQEYRAVKLRDAMRNFKGSKRNCGEQGEGCATRPCCAGLSCVGSRPGGLCQYD.

An N-terminal signal peptide occupies residues 1 to 21 (MKLTCVLIIAMLFLIVCQLNT). Residues 22-48 (ADDSTDKQEYRAVKLRDAMRNFKGSKR) constitute a propeptide that is removed on maturation. Disulfide bonds link Cys-50–Cys-63, Cys-57–Cys-68, and Cys-62–Cys-77.

It belongs to the conotoxin O1 superfamily. As to expression, expressed by the venom duct.

It is found in the secreted. The protein is Conotoxin ArMKLT2-0321 of Conus arenatus (Sand-dusted cone).